The following is a 350-amino-acid chain: Biotin synthase (350 aa).

The 225-residue stretch at 54–278 (REIQLSTLLS…TMPQSYVRLS (225 aa)) folds into the Radical SAM core domain. [4Fe-4S] cluster-binding residues include cysteine 69, cysteine 73, and cysteine 76. Residues cysteine 113, cysteine 144, cysteine 204, and arginine 276 each contribute to the [2Fe-2S] cluster site.

The protein belongs to the radical SAM superfamily. Biotin synthase family. Homodimer. It depends on [4Fe-4S] cluster as a cofactor. The cofactor is [2Fe-2S] cluster.

The enzyme catalyses (4R,5S)-dethiobiotin + (sulfur carrier)-SH + 2 reduced [2Fe-2S]-[ferredoxin] + 2 S-adenosyl-L-methionine = (sulfur carrier)-H + biotin + 2 5'-deoxyadenosine + 2 L-methionine + 2 oxidized [2Fe-2S]-[ferredoxin]. It functions in the pathway cofactor biosynthesis; biotin biosynthesis; biotin from 7,8-diaminononanoate: step 2/2. Functionally, catalyzes the conversion of dethiobiotin (DTB) to biotin by the insertion of a sulfur atom into dethiobiotin via a radical-based mechanism. The protein is Biotin synthase of Neisseria meningitidis serogroup C / serotype 2a (strain ATCC 700532 / DSM 15464 / FAM18).